The primary structure comprises 178 residues: Small ribosomal subunit protein uS4 (178 aa).

Residues 104–166 form the S4 RNA-binding domain; it reads RRLQTIVFRK…SNSPMASENH (63 aa). The segment at 158-178 is disordered; it reads NSPMASENHPERTAATSEENQ.

This sequence belongs to the universal ribosomal protein uS4 family. Part of the 30S ribosomal subunit. Contacts protein S5. The interaction surface between S4 and S5 is involved in control of translational fidelity.

In terms of biological role, one of the primary rRNA binding proteins, it binds directly to 16S rRNA where it nucleates assembly of the body of the 30S subunit. Functionally, with S5 and S12 plays an important role in translational accuracy. This chain is Small ribosomal subunit protein uS4, found in Methanococcus maripaludis (strain DSM 14266 / JCM 13030 / NBRC 101832 / S2 / LL).